The chain runs to 29 residues: Snake venom metalloproteinase bothrolysin (29 aa).

The 24-residue stretch at 6–29 (RYIELFLVVDSGMFMKYNGNSDKI) folds into the Peptidase M12B domain. Glu-9 contributes to the Ca(2+) binding site.

The protein belongs to the venom metalloproteinase (M12B) family. Zn(2+) is required as a cofactor. As to expression, expressed by the venom gland.

It localises to the secreted. It catalyses the reaction Cleavage of 4-Gln-|-His-5, 9-Ser-|-His-10 and 14-Ala-|-Leu-15 of insulin B chain and Pro-|-Phe of angiotensin I.. Snake venom zinc metalloproteinase that impairs hemostasis in the envenomed animal. The protein is Snake venom metalloproteinase bothrolysin of Bothrops jararaca (Jararaca).